Consider the following 358-residue polypeptide: Putative pyruvyl transferase EpsI (358 aa).

It belongs to the polysaccharide pyruvyl transferase family.

Functionally, may be involved in the production of the exopolysaccharide (EPS) component of the extracellular matrix during biofilm formation. EPS is responsible for the adhesion of chains of cells into bundles. The polypeptide is Putative pyruvyl transferase EpsI (epsI) (Bacillus subtilis (strain 168)).